We begin with the raw amino-acid sequence, 754 residues long: Phosphatase and actin regulator 4B (754 aa).

Residues 1-12 (MENRDDEVEHQH) are compositionally biased toward basic and acidic residues. 4 disordered regions span residues 1-38 (MENR…FSTL), 83-105 (KELP…KNGH), 120-625 (VHSP…SKEQ), and 637-666 (LTRR…DRQA). One copy of the RPEL 1 repeat lies at 61–86 (EVLERKMSMRRPRQELIEQGVLKELP). Composition is skewed to basic and acidic residues over residues 138–153 (PEDR…DHRG), 184–221 (HGED…EPDW), and 229–241 (SSVE…RESD). Composition is skewed to low complexity over residues 296 to 307 (SFCSSNSSSSSS) and 316 to 333 (SSAG…LTTS). 4 stretches are compositionally biased toward pro residues: residues 348–357 (KQPPMPPPKP), 381–390 (KPSPPMPPKR), 427–445 (LPPP…PSPP), and 460–478 (YPLP…PPED). 3 stretches are compositionally biased toward acidic residues: residues 483–503 (DEDD…DEEP), 541–557 (SEEE…ESDS), and 566–576 (DESDEDEEDDS). Over residues 605 to 615 (QAPERQAKSEH) the composition is skewed to basic and acidic residues. 2 RPEL repeats span residues 635–660 (TALT…QPKN) and 673–698 (RRLT…RFHE). Position 642 is a phosphoserine (Ser642).

This sequence belongs to the phosphatase and actin regulator family. In terms of assembly, binds ppp1ca and actin.

Its subcellular location is the cytoplasm. It localises to the cell projection. The protein resides in the lamellipodium. Its function is as follows. Regulator of protein phosphatase 1 (PP1) required for neural tube and optic fissure closure, and enteric neural crest cell (ENCCs) migration during development. Acts as an activator of PP1. During neural tube closure, localizes to the ventral neural tube and activates PP1, leading to down-regulate cell proliferation within cranial neural tissue and the neural retina. Also acts as a regulator of migration of enteric neural crest cells (ENCCs) by activating PP1, leading to repression of the integrin signaling through the rho/rock pathway. This is Phosphatase and actin regulator 4B (phactr4b) from Danio rerio (Zebrafish).